We begin with the raw amino-acid sequence, 338 residues long: NAC domain-containing protein 46 (338 aa).

In terms of domain architecture, NAC spans 20–171 (LPPGFRFHPT…EWVVCRVFHK (152 aa)). A DNA-binding region spans residues 118–177 (VGMKKTLVFYTGRAPKGEKTNWVMHEYRLDGKYSYHNLPKTARDEWVVCRVFHKNAPSTT).

In terms of assembly, interacts with RCD1.

It is found in the nucleus. Functionally, transcriptional activator that acts as a positive regulator of leaf senescence. Activates NYC1, SGR1, SGR2 and PAO, which are genes involved in chlorophyll catabolic processes. Activates senescence-associated genes, such as RNS1, SAG12 and SAG13. This Arabidopsis thaliana (Mouse-ear cress) protein is NAC domain-containing protein 46.